The following is a 164-amino-acid chain: Lipoprotein signal peptidase (164 aa).

The next 3 helical transmembrane spans lie at W12–Q32, W70–S90, and A102–V122. Residues D123 and D141 contribute to the active site. The helical transmembrane segment at F137–L157 threads the bilayer.

This sequence belongs to the peptidase A8 family.

The protein localises to the cell inner membrane. It carries out the reaction Release of signal peptides from bacterial membrane prolipoproteins. Hydrolyzes -Xaa-Yaa-Zaa-|-(S,diacylglyceryl)Cys-, in which Xaa is hydrophobic (preferably Leu), and Yaa (Ala or Ser) and Zaa (Gly or Ala) have small, neutral side chains.. The protein operates within protein modification; lipoprotein biosynthesis (signal peptide cleavage). Its function is as follows. This protein specifically catalyzes the removal of signal peptides from prolipoproteins. This is Lipoprotein signal peptidase from Shigella sonnei (strain Ss046).